A 194-amino-acid polypeptide reads, in one-letter code: Segregation and condensation protein B (194 aa).

The protein belongs to the ScpB family. As to quaternary structure, homodimer. Homodimerization may be required to stabilize the binding of ScpA to the Smc head domains. Component of a cohesin-like complex composed of ScpA, ScpB and the Smc homodimer, in which ScpA and ScpB bind to the head domain of Smc. The presence of the three proteins is required for the association of the complex with DNA.

Its subcellular location is the cytoplasm. Functionally, participates in chromosomal partition during cell division. May act via the formation of a condensin-like complex containing Smc and ScpA that pull DNA away from mid-cell into both cell halves. The polypeptide is Segregation and condensation protein B (Brevibacillus brevis (strain 47 / JCM 6285 / NBRC 100599)).